A 57-amino-acid polypeptide reads, in one-letter code: Large ribosomal subunit protein bL33 (57 aa).

The protein belongs to the bacterial ribosomal protein bL33 family.

This Shewanella halifaxensis (strain HAW-EB4) protein is Large ribosomal subunit protein bL33.